A 284-amino-acid chain; its full sequence is Ubiquitin thioesterase otubain-like (284 aa).

One can recognise an OTU domain in the interval 77–274 (GEIRYIRGDG…PGHYDVIYKK (198 aa)). Aspartate 85 is an active-site residue. Cysteine 88 serves as the catalytic Nucleophile. Isoleucine 176 contributes to the substrate binding site. Catalysis depends on residues histidine 245 and histidine 267.

Belongs to the peptidase C65 family.

The catalysed reaction is Thiol-dependent hydrolysis of ester, thioester, amide, peptide and isopeptide bonds formed by the C-terminal Gly of ubiquitin (a 76-residue protein attached to proteins as an intracellular targeting signal).. Hydrolase that can remove conjugated ubiquitin from proteins and plays an important regulatory role at the level of protein turnover by preventing degradation. Specifically cleaves 'Lys-48'-linked polyubiquitin. The sequence is that of Ubiquitin thioesterase otubain-like (otub-1) from Caenorhabditis elegans.